The chain runs to 181 residues: uncharacterized protein (181 aa).

The segment at Glu25–Asp47 is disordered. A compositionally biased stretch (acidic residues) spans Ala32–Asp47. A helical membrane pass occupies residues Ile149–Leu169.

Its subcellular location is the cytoplasm. It localises to the membrane. This is an uncharacterized protein from Schizosaccharomyces pombe (strain 972 / ATCC 24843) (Fission yeast).